The primary structure comprises 541 residues: Protein panoramix (541 aa).

The segment at methionine 1 to phenylalanine 169 is interaction with Piwi. 2 disordered regions span residues serine 52–serine 75 and threonine 198–aspartate 281. The stretch at methionine 194–serine 216 forms a coiled coil. Over residues lysine 203–asparagine 220 the composition is skewed to basic residues. 2 stretches are compositionally biased toward basic and acidic residues: residues aspartate 241–arginine 251 and serine 269–glutamate 279. The interval leucine 315 to glutamate 343 is nxf2-interacting region (NIR). Positions leucine 323–glutamate 343 form a coiled coil. The necessary for interaction with nxf2 and protein stability stretch occupies residues threonine 387–alanine 446.

As to quaternary structure, in the ovaries, part of a complex composed of at least Panx, nxf2, piwi and Nxt1. The complex is knowns as Panx-induced cotranscriptional silencing (PICTS) complex, Panx-nxf2-dependent TAP/p15 silencing (Pandas complex), SFiNX (silencing factor interacting nuclear export variant) or piwi-Panx-nxf2-p15 (PPNP) complex. Interacts (via NIR region) with nxf2 (via TAP-C domain); the interaction is direct. As to expression, expressed in female gonads (at protein level).

It is found in the nucleus. In terms of biological role, acts via the piwi-interacting RNA (piRNA) pathway which mediates the repression of transposable elements during meiosis by forming complexes composed of piRNAs and piwi proteins and governs the methylation and subsequent repression of transposons. Required for transcriptional silencing of transposons targeted by piwi and confers its effects by interacting with nascent RNA transcripts. Likely to be recruited to nascent transcripts cotranscriptionally by piwi and to recruit additional factors involved in transcriptional silencing. In the ovaries, forms a complex with nxf2, piwi and Nxt1 which acts as effectors of cotranscriptional transposon silencing. The interaction with nxf2 stabilizes the nuclear protein complex. This chain is Protein panoramix, found in Drosophila melanogaster (Fruit fly).